Consider the following 342-residue polypeptide: S-adenosylmethionine:tRNA ribosyltransferase-isomerase (342 aa).

This sequence belongs to the QueA family. Monomer.

The protein resides in the cytoplasm. It carries out the reaction 7-aminomethyl-7-carbaguanosine(34) in tRNA + S-adenosyl-L-methionine = epoxyqueuosine(34) in tRNA + adenine + L-methionine + 2 H(+). Its pathway is tRNA modification; tRNA-queuosine biosynthesis. In terms of biological role, transfers and isomerizes the ribose moiety from AdoMet to the 7-aminomethyl group of 7-deazaguanine (preQ1-tRNA) to give epoxyqueuosine (oQ-tRNA). The protein is S-adenosylmethionine:tRNA ribosyltransferase-isomerase of Streptococcus sanguinis (strain SK36).